The sequence spans 474 residues: Aromatic amino acid aminotransferase C56E4.03 (474 aa).

This sequence belongs to the class-I pyridoxal-phosphate-dependent aminotransferase family. It depends on pyridoxal 5'-phosphate as a cofactor.

The protein localises to the cytoplasm. It catalyses the reaction an aromatic L-alpha-amino acid + 2-oxoglutarate = an aromatic oxo-acid + L-glutamate. Functionally, has aromatic amino acid transaminase activity. The sequence is that of Aromatic amino acid aminotransferase C56E4.03 from Schizosaccharomyces pombe (strain 972 / ATCC 24843) (Fission yeast).